A 310-amino-acid polypeptide reads, in one-letter code: tRNA pseudouridine synthase B (310 aa).

Catalysis depends on Asp-49, which acts as the Nucleophile.

The protein belongs to the pseudouridine synthase TruB family. Type 1 subfamily.

The enzyme catalyses uridine(55) in tRNA = pseudouridine(55) in tRNA. Functionally, responsible for synthesis of pseudouridine from uracil-55 in the psi GC loop of transfer RNAs. This chain is tRNA pseudouridine synthase B, found in Sinorhizobium medicae (strain WSM419) (Ensifer medicae).